The following is a 191-amino-acid chain: Calcium and integrin-binding protein 1 (191 aa).

A lipid anchor (N-myristoyl glycine) is attached at glycine 2. EF-hand domains lie at 103–138 and 148–183; these read TPDI…LTGE and EMKQ…SPDF. Aspartate 116, aspartate 118, aspartate 120, threonine 122, aspartate 127, aspartate 161, aspartate 163, aspartate 165, threonine 167, and glutamate 172 together coordinate Ca(2+). At aspartate 118 the chain carries Phosphoserine.

In terms of assembly, monomer. Interacts with MYO1C. Interacts (via C-terminal region) with PPP3R1 and CACNA1C; the interactions increase upon cardiomyocytes hypertrophy. Interacts with the heterodimeric integrin alpha-IIb/beta3 (ITGA2B-ITGB3). Interacts with ITGA2B (via cytoplasmic domain); the interaction is direct and calcium-dependent. Interacts with the protein kinases PLK2/SNK and PRKDC (via the region immediately upstream of the kinase domain). Interacts with PLK3; the interaction inhibits PLK3 kinase activity. Interacts with PSEN2. Interacts (via C-terminus) with F8. Interacts with NBR1 (via C-terminus). Interacts with FEZ1 (via C-terminus). Interacts with UBR5 (via C-terminus); the interaction is sensitive to DNA damage, and may target CIB1 for ubiquitin-mediated degradation. Interacts with IFI6; the interaction is direct. Interacts with BCL2. Interacts with ITPR3; the interaction occurs in a calcium-dependent manner. Interacts with PTK2/FAK1. Interacts with MAP3K5; the interaction inhibits MAP3K5 activation by phosphorylation, and its subsequent interaction with TRAF2. Isoform 2 interacts with PRKD2 (via N-terminal AP-rich region), PTK2/FAK1 and PAK1. Interacts with TAS1R2 (via C-terminus); the interaction is independent of the myristoylation state of CIB1. Interacts (via C-terminal region) with STMN2 (via the N-terminal region); the interaction is direct, occurs in a calcium-dependent manner and attenuates the STMN2-induced neurite outgrowth inhibition. Interacts with SPHK1, the interaction occurs in a calcium-dependent manner. Interacts with ITGA2B (via C-terminal cytoplasmic tail); the interaction occurs upon platelet aggregation and is stabilized/increased in a calcium and magnesium-dependent manner. Interacts with PAK1 (via N-terminal region); the interaction is direct and occurs in a calcium-dependent manner. Interacts with RAC3 (via C-terminal region); the interaction induces their association with the cytoskeleton upon alpha-IIb/beta3 integrin-mediated adhesion. Interacts with ITGA5 and ITGAV. Interacts and forms a complex with TMC6 and TMC8; the interaction stabilizes each component of the complex. (Microbial infection) Interacts with human papillomavirus 4/HPV4 protein E8, human papillomavirus 5/HPV5 protein E1, and human papillomavirus 16/HPV16 proteins E2 and E5. In terms of processing, phosphorylation of isoform 2 at Ser-118 by PRKD2 increases its ability to stimulate tumor angiogenesis. As to expression, ubiquitously expressed. Expressed in the epidermis, hair follicles and keratinocytes. Detected in platelets and in cell lines of megakaryocytic and erythrocytic lineages. Both isoform 1 and isoform 2 are detected in various cancer cell lines, with isoform 2 being the predominant form (at protein level).

Its subcellular location is the membrane. It is found in the cell membrane. The protein localises to the sarcolemma. The protein resides in the apical cell membrane. It localises to the cell projection. Its subcellular location is the ruffle membrane. It is found in the filopodium tip. The protein localises to the growth cone. The protein resides in the lamellipodium. It localises to the cytoplasm. Its subcellular location is the cytoskeleton. It is found in the microtubule organizing center. The protein localises to the centrosome. The protein resides in the perinuclear region. It localises to the nucleus. Its subcellular location is the neuron projection. It is found in the perikaryon. The protein localises to the golgi apparatus. The protein resides in the trans-Golgi network. In terms of biological role, calcium-binding protein that plays a role in the regulation of numerous cellular processes, such as cell differentiation, cell division, cell proliferation, cell migration, thrombosis, angiogenesis, cardiac hypertrophy and apoptosis. Involved in bone marrow megakaryocyte differentiation by negatively regulating thrombopoietin-mediated signaling pathway. Participates in the endomitotic cell cycle of megakaryocyte, a form of mitosis in which both karyokinesis and cytokinesis are interrupted. Plays a role in integrin signaling by negatively regulating alpha-IIb/beta3 activation in thrombin-stimulated megakaryocytes preventing platelet aggregation. Up-regulates PTK2/FAK1 activity, and is also needed for the recruitment of PTK2/FAK1 to focal adhesions; it thus appears to play an important role in focal adhesion formation. Positively regulates cell migration on fibronectin in a CDC42-dependent manner, the effect being negatively regulated by PAK1. Functions as a negative regulator of stress activated MAP kinase (MAPK) signaling pathways. Down-regulates inositol 1,4,5-trisphosphate receptor-dependent calcium signaling. Involved in sphingosine kinase SPHK1 translocation to the plasma membrane in a N-myristoylation-dependent manner preventing TNF-alpha-induced apoptosis. Regulates serine/threonine-protein kinase PLK3 activity for proper completion of cell division progression. Plays a role in microtubule (MT) dynamics during neuronal development; disrupts the MT depolymerization activity of STMN2 attenuating NGF-induced neurite outgrowth and the MT reorganization at the edge of lamellipodia. Promotes cardiomyocyte hypertrophy via activation of the calcineurin/NFAT signaling pathway. Stimulates calcineurin PPP3R1 activity by mediating its anchoring to the sarcolemma. In ischemia-induced (pathological or adaptive) angiogenesis, stimulates endothelial cell proliferation, migration and microvessel formation by activating the PAK1 and ERK1/ERK2 signaling pathway. Also promotes cancer cell survival and proliferation. May regulate cell cycle and differentiation of spermatogenic germ cells, and/or differentiation of supporting Sertoli cells. Forms a complex with TMC6/EVER1 and TMC8/EVER2 in lymphocytes and keratynocytes where CIB1 stabilizes TMC6 and TMC8 levels and reciprocally. Functionally, acts as a restriction factor that promotes keratinocyte-intrinsic immunity to human beta-papillomaviruses (HPVs). Its function is as follows. Plays a regulatory role in angiogenesis and tumor growth by mediating PKD/PRKD2-induced vascular endothelial growth factor A (VEGFA) secretion. The sequence is that of Calcium and integrin-binding protein 1 (CIB1) from Homo sapiens (Human).